A 931-amino-acid polypeptide reads, in one-letter code: Valine--tRNA ligase (931 aa).

The short motif at 43–53 (PNVTGALHIGH) is the 'HIGH' region element. The tract at residues 351–370 (IPHTDKDGNAHDAEPRTIQT) is disordered. Basic and acidic residues predominate over residues 353–365 (HTDKDGNAHDAEP). Positions 552–556 (KMSKS) match the 'KMSKS' region motif. Lys-555 serves as a coordination point for ATP. The segment at 691–717 (LQGRGLGEGDEAVPAPADGPLSPALSP) is disordered. The stretch at 864–930 (VIDIAAERER…DRLSAALARL (67 aa)) forms a coiled coil.

This sequence belongs to the class-I aminoacyl-tRNA synthetase family. ValS type 1 subfamily. In terms of assembly, monomer.

Its subcellular location is the cytoplasm. It carries out the reaction tRNA(Val) + L-valine + ATP = L-valyl-tRNA(Val) + AMP + diphosphate. Catalyzes the attachment of valine to tRNA(Val). As ValRS can inadvertently accommodate and process structurally similar amino acids such as threonine, to avoid such errors, it has a 'posttransfer' editing activity that hydrolyzes mischarged Thr-tRNA(Val) in a tRNA-dependent manner. The protein is Valine--tRNA ligase of Sphingopyxis alaskensis (strain DSM 13593 / LMG 18877 / RB2256) (Sphingomonas alaskensis).